The primary structure comprises 364 residues: Dihydroorotate dehydrogenase (quinone) (364 aa).

FMN-binding positions include 61–65 (AGFDK) and serine 85. Substrate is bound at residue lysine 65. Position 110–114 (110–114 (NRMGF)) interacts with substrate. Positions 139 and 170 each coordinate FMN. Asparagine 170 provides a ligand contact to substrate. The Nucleophile role is filled by serine 173. Asparagine 175 serves as a coordination point for substrate. The FMN site is built by lysine 214 and serine 242. A substrate-binding site is contributed by 243 to 244 (NT). Residues glycine 266, glycine 295, and 316–317 (YS) each bind FMN.

Belongs to the dihydroorotate dehydrogenase family. Type 2 subfamily. Monomer. It depends on FMN as a cofactor.

Its subcellular location is the cell membrane. The enzyme catalyses (S)-dihydroorotate + a quinone = orotate + a quinol. It participates in pyrimidine metabolism; UMP biosynthesis via de novo pathway; orotate from (S)-dihydroorotate (quinone route): step 1/1. Functionally, catalyzes the conversion of dihydroorotate to orotate with quinone as electron acceptor. The polypeptide is Dihydroorotate dehydrogenase (quinone) (Bradyrhizobium sp. (strain BTAi1 / ATCC BAA-1182)).